Reading from the N-terminus, the 304-residue chain is Tyrosine recombinase XerD (304 aa).

The Core-binding (CB) domain occupies 6–91 (EPWRKTLETF…AIRSFHKFLL (86 aa)). One can recognise a Tyr recombinase domain in the interval 112–298 (YLPSVLTIEE…DRSFIKEVHK (187 aa)). Catalysis depends on residues Arg155, Lys179, His250, Arg253, and His276. Catalysis depends on Tyr285, which acts as the O-(3'-phospho-DNA)-tyrosine intermediate.

Belongs to the 'phage' integrase family. XerD subfamily. In terms of assembly, forms a cyclic heterotetrameric complex composed of two molecules of XerC and two molecules of XerD.

The protein localises to the cytoplasm. Functionally, site-specific tyrosine recombinase, which acts by catalyzing the cutting and rejoining of the recombining DNA molecules. The XerC-XerD complex is essential to convert dimers of the bacterial chromosome into monomers to permit their segregation at cell division. It also contributes to the segregational stability of plasmids. This is Tyrosine recombinase XerD from Chlorobaculum tepidum (strain ATCC 49652 / DSM 12025 / NBRC 103806 / TLS) (Chlorobium tepidum).